The primary structure comprises 476 residues: Efflux pump atB (476 aa).

Residues 1–38 (MAPQLAGSSHSSSASDQAHRQSSDPALESGSDTHVGSI) form a disordered region. A run of 10 helical transmembrane segments spans residues 69–89 (LIVA…LAPL), 96–116 (KPVY…CAVA), 127–147 (FFNG…VGDL), 186–206 (WSFY…SLLV), 264–284 (LLLC…FGAF), 294–314 (FNLW…IIGI), 347–367 (LPPA…FAWT), 372–392 (VHWI…IMIF), 403–425 (YPLY…AAAF), and 440–460 (WAGF…YIFY).

This sequence belongs to the major facilitator superfamily.

Its subcellular location is the cell membrane. Efflux pump that might be required for efficient secretion of terreic acid. The protein is Efflux pump atB of Aspergillus terreus (strain NIH 2624 / FGSC A1156).